The following is a 397-amino-acid chain: Serpin B10 (397 aa).

The cysteines at positions 68 and 395 are disulfide-linked. Positions 74–77 (KKRK) match the Nuclear localization signal motif.

It belongs to the serpin family. Ov-serpin subfamily. In terms of tissue distribution, expressed specifically in myeloid cells and the bone marrow.

It is found in the nucleus. The protein localises to the cytoplasm. In terms of biological role, protease inhibitor that may play a role in the regulation of protease activities during hematopoiesis and apoptosis induced by TNF. May regulate protease activities in the cytoplasm and in the nucleus. In Homo sapiens (Human), this protein is Serpin B10 (SERPINB10).